Consider the following 296-residue polypeptide: uncharacterized protein (296 aa).

An N-terminal signal peptide occupies residues methionine 1–alanine 20.

This is an uncharacterized protein from Rickettsia felis (strain ATCC VR-1525 / URRWXCal2) (Rickettsia azadi).